The following is a 282-amino-acid chain: Biotin synthase (282 aa).

Positions 1 to 228 constitute a Radical SAM core domain; sequence MQEIFLCSIS…NARLMVAGGR (228 aa). Residues cysteine 17, cysteine 21, and cysteine 24 each contribute to the [4Fe-4S] cluster site. 4 residues coordinate [2Fe-2S] cluster: cysteine 61, cysteine 96, cysteine 154, and arginine 221.

This sequence belongs to the radical SAM superfamily. Biotin synthase family. In terms of assembly, homodimer. It depends on [4Fe-4S] cluster as a cofactor. [2Fe-2S] cluster is required as a cofactor.

It carries out the reaction (4R,5S)-dethiobiotin + (sulfur carrier)-SH + 2 reduced [2Fe-2S]-[ferredoxin] + 2 S-adenosyl-L-methionine = (sulfur carrier)-H + biotin + 2 5'-deoxyadenosine + 2 L-methionine + 2 oxidized [2Fe-2S]-[ferredoxin]. It functions in the pathway cofactor biosynthesis; biotin biosynthesis; biotin from 7,8-diaminononanoate: step 2/2. In terms of biological role, catalyzes the conversion of dethiobiotin (DTB) to biotin by the insertion of a sulfur atom into dethiobiotin via a radical-based mechanism. The sequence is that of Biotin synthase from Helicobacter pylori (strain Shi470).